A 44-amino-acid polypeptide reads, in one-letter code: Antifungal protein R (44 aa).

This sequence belongs to the thaumatin family.

Has antifungal activity. Inhibits the growth of Trichoderma viridae and Candida albicans. The protein is Antifungal protein R of Hordeum vulgare (Barley).